The chain runs to 106 residues: Pyrimidine/purine nucleoside phosphorylase (106 aa).

It belongs to the nucleoside phosphorylase PpnP family.

It carries out the reaction a purine D-ribonucleoside + phosphate = a purine nucleobase + alpha-D-ribose 1-phosphate. The enzyme catalyses adenosine + phosphate = alpha-D-ribose 1-phosphate + adenine. The catalysed reaction is cytidine + phosphate = cytosine + alpha-D-ribose 1-phosphate. It catalyses the reaction guanosine + phosphate = alpha-D-ribose 1-phosphate + guanine. It carries out the reaction inosine + phosphate = alpha-D-ribose 1-phosphate + hypoxanthine. The enzyme catalyses thymidine + phosphate = 2-deoxy-alpha-D-ribose 1-phosphate + thymine. The catalysed reaction is uridine + phosphate = alpha-D-ribose 1-phosphate + uracil. It catalyses the reaction xanthosine + phosphate = alpha-D-ribose 1-phosphate + xanthine. Its function is as follows. Catalyzes the phosphorolysis of diverse nucleosides, yielding D-ribose 1-phosphate and the respective free bases. Can use uridine, adenosine, guanosine, cytidine, thymidine, inosine and xanthosine as substrates. Also catalyzes the reverse reactions. This is Pyrimidine/purine nucleoside phosphorylase from Burkholderia multivorans (strain ATCC 17616 / 249).